A 220-amino-acid chain; its full sequence is SSSTNNSSGSSSTNNSSGSSSTNNSSGSSSTNNASGSSSSNNTSGSSRNNSSGSSSSNNSSSGSSAGNSSGSSSSNSSGSSGIGSLSRNSSSSSSSQAAGSSSSRRVSADGSSSSSSASNSAAAQNSASSSETINADGSENESSSSSSSAAQNSATRSQVINADGSQSSSSSSSSASNQASATSSSSVSADGSESESSSSSSSSSSSSSESSSSSSWSSA.

Low complexity-rich tracts occupy residues 1 to 131 and 141 to 155; these read SSST…ASSS and NESS…QNSA. The interval 1–220 is disordered; sequence SSSTNNSSGS…SSSSSSWSSA (220 aa). Polar residues predominate over residues 156–165; that stretch reads TRSQVINADG. Residues 166–220 are compositionally biased toward low complexity; that stretch reads SQSSSSSSSSASNQASATSSSSVSADGSESESSSSSSSSSSSSSESSSSSSWSSA.

As to expression, produced exclusively in the middle (MSG) section of silk glands.

The protein resides in the secreted. In terms of biological role, provides the silk fibroin thread with a sticky coating. Acts as a cement by sticking silk threads together. In Galleria mellonella (Greater wax moth), this protein is Sericin-2 (SER2).